Here is a 603-residue protein sequence, read N- to C-terminus: Terpenoid synthase 22 (603 aa).

Asp356, Asp360, Asn500, and Glu508 together coordinate Mg(2+). The DDXXD motif signature appears at 356–360 (DDTCD).

The protein belongs to the terpene synthase family. Tpsa subfamily. It depends on Mg(2+) as a cofactor. The cofactor is Mn(2+). Predominantly expressed in siliques but also in flowers.

The protein localises to the cytoplasm. Its pathway is secondary metabolite biosynthesis; terpenoid biosynthesis. Its function is as follows. Involved in terpene biosynthesis in roots. Possesses sesquiterpene (C15) synthase activity in vitro. Does not seem to be involved in diterpene (C20) biosynthesis. This is Terpenoid synthase 22 from Arabidopsis thaliana (Mouse-ear cress).